Consider the following 397-residue polypeptide: Serpin B10 (397 aa).

The segment at 62–85 (RDQGVKSSPESEKKRKMEFNSSNS) is disordered. The segment covering 70–79 (PESEKKRKME) has biased composition (basic and acidic residues). The Nuclear localization signal signature appears at 74 to 77 (KKRK).

This sequence belongs to the serpin family. Ov-serpin subfamily.

The protein resides in the nucleus. It is found in the cytoplasm. Protease inhibitor that may play a role in the regulation of protease activities during hematopoiesis and apoptosis induced by TNF. May regulate protease activities in the cytoplasm and in the nucleus. In Papio anubis (Olive baboon), this protein is Serpin B10 (SERPINB10).